Here is a 710-residue protein sequence, read N- to C-terminus: Early transcription factor 82 kDa subunit (710 aa).

Belongs to the poxviridae VETF large subunit family. Heterodimer of a 70 kDa and a 82 kDa subunit. Part of the early transcription complex composed of ETF, RAP94/OPG109, and the DNA-directed RNA polymerase.

The protein localises to the virion. Its function is as follows. Acts with RNA polymerase to initiate transcription from early gene promoters. Is recruited by the RPO-associated protein of 94 kDa RAP94/OPG109 to form the early transcription complex, which also contains the core RNA polymerase. ETF heterodimer binds to early gene promoters. In Homo sapiens (Human), this protein is Early transcription factor 82 kDa subunit (OPG133).